The sequence spans 348 residues: MVDPIYVEVADMFLKRYKDYVINLFKEPVPLNRVQKLLQENKFAGELFDMSNRLCTMYENGTWHSQVLETLDLDKIYANVDMMPLEDDSQYSDNLVKELLRYFKQDFFTWCNKPVCKSCGASGDDINGAAIQAPTNEEAKFNCGSVEVYHCQKCNSEVRFPRYNDPIKLLETRTGRCGEWCNLFTLVLKSFGLESRYIWNREDHVWCEYYSPYLKRWIHVDSCEQSFDEPFIYSKNWNKSMSYCIGFWRYGVVDVSKRYILQNQLPRDIIKEDDLQFLCHALTKRLRTGLSDDESYKMYCRDDLEQLELNPSATPTKEMQKLKISKTGNKGRISGSAEWKESRGENGK.

Zn(2+)-binding residues include Cys116, Cys119, Cys151, and Cys154. Residue Cys177 is the Nucleophile of the active site. Residues His204 and Asp221 contribute to the active site. Glu224 is a binding site for substrate. Positions Pro311–Lys348 are disordered. Positions Glu338–Lys348 are enriched in basic and acidic residues.

This sequence belongs to the transglutaminase-like superfamily. PNGase family. Requires Zn(2+) as cofactor.

It localises to the cytoplasm. The enzyme catalyses Hydrolysis of an N(4)-(acetyl-beta-D-glucosaminyl)asparagine residue in which the glucosamine residue may be further glycosylated, to yield a (substituted) N-acetyl-beta-D-glucosaminylamine and a peptide containing an aspartate residue.. Its function is as follows. Specifically deglycosylates the denatured form of N-linked glycoproteins in the cytoplasm and assists their proteasome-mediated degradation. Cleaves the beta-aspartyl-glucosamine (GlcNAc) of the glycan and the amide side chain of Asn, converting Asn to Asp. Prefers proteins containing high-mannose over those bearing complex type oligosaccharides. Can recognize misfolded proteins in the endoplasmic reticulum that are exported to the cytosol to be destroyed and deglycosylate them, while it has no activity toward native proteins. Deglycosylation is a prerequisite for subsequent proteasome-mediated degradation of some, but not all, misfolded glycoproteins. This chain is Peptide-N(4)-(N-acetyl-beta-glucosaminyl)asparagine amidase (PNG1), found in Candida glabrata (strain ATCC 2001 / BCRC 20586 / JCM 3761 / NBRC 0622 / NRRL Y-65 / CBS 138) (Yeast).